Here is a 1454-residue protein sequence, read N- to C-terminus: Beta-1,3-glucan-binding protein (1454 aa).

The propeptide occupies 1–197 (MSFDLTTPFD…KRSLEMRMMN (197 aa)). Asn33, Asn55, Asn185, Asn571, Asn592, Asn825, Asn882, and Asn1153 each carry an N-linked (GlcNAc...) asparagine glycan.

It belongs to the glycosyl hydrolase 16 family. Monomer. In terms of tissue distribution, expressed in the hepatopancreas and secreted into the hemolymph. Expressed at lower levels in muscle, pleopod and gill tissue.

Its subcellular location is the secreted. Functionally, involved in the recognition of invading microorganisms. Binds specifically to beta-1,3-glucan and activates the prophenoloxidase cascade. In Penaeus vannamei (Whiteleg shrimp), this protein is Beta-1,3-glucan-binding protein.